The chain runs to 566 residues: MKTIIALSYILCLVFAQKLPGNDNSTATLCLGHHAVPNGTLVKTITNDQIEVTNATELVQSSSTGRICDSPHRILDGKNCTLIDALLGDPHCDGFQNKEWDLFVERSKAYSNCYPYDVPDYASLRSLVASSGTLEFINEDFNWTGVAQSGESYACKRGSVKSFFSRLNWLHESEYKYPALNVTMPNNGKFDKLYIWGVHHPSTDREQTNLYVRASGRVTVSTKRSQQTVIPNIGSRPWVRGLSSRISIYWTIVKPGDILLINSTGNLIAPRGYFKIRTGKSSIMRSDAPIGTCSSECITPNGSIPNDKPFQNVNRITYGACPRYVKQNTLKLATGMRNVPEKQTRGIFGAIAGFIENGWEGMVNGWYGFRHQNSEGTGQAADLKSTQAAIDQINGKLNRLIEKTNEKFHQIEKEFSEVEGRIQDLEKYVEDTKIDLWSYNAELLVALENQHTIDLTDSEMNKLFEKTRKQLRENAEDMGNGCFKIYHKCDNACIGSIRNGTYDHDVYRDEALNNRFQIKGVELKSGYKDWILWISFAISCFLLCVVLLGFIMWACQKGNIRCNICI.

The signal sequence occupies residues 1 to 16 (MKTIIALSYILCLVFA). Residues 17–530 (QKLPGNDNST…VELKSGYKDW (514 aa)) are Extracellular-facing. N-linked (GlcNAc...) asparagine; by host glycosylation is found at Asn24, Asn38, Asn54, and Asn79. 6 disulfide bridges follow: Cys30/Cys482, Cys68/Cys293, Cys80/Cys92, Cys113/Cys155, Cys297/Cys321, and Cys489/Cys493. N-linked (GlcNAc...) asparagine; by host glycosylation is found at Asn142, Asn181, Asn262, and Asn301. Residue Asn499 is glycosylated (N-linked (GlcNAc...) asparagine; by host). The helical transmembrane segment at 531–551 (ILWISFAISCFLLCVVLLGFI) threads the bilayer. The Cytoplasmic portion of the chain corresponds to 552–566 (MWACQKGNIRCNICI). Residues Cys555, Cys562, and Cys565 are each lipidated (S-palmitoyl cysteine; by host).

Belongs to the influenza viruses hemagglutinin family. Homotrimer of disulfide-linked HA1-HA2. In terms of processing, palmitoylated. In natural infection, inactive HA is matured into HA1 and HA2 outside the cell by one or more trypsin-like, arginine-specific endoprotease secreted by the bronchial epithelial cells. One identified protease that may be involved in this process is secreted in lungs by club cells.

The protein localises to the virion membrane. The protein resides in the host apical cell membrane. Its function is as follows. Binds to sialic acid-containing receptors on the cell surface, bringing about the attachment of the virus particle to the cell. This attachment induces virion internalization either through clathrin-dependent endocytosis or through clathrin- and caveolin-independent pathway. Plays a major role in the determination of host range restriction and virulence. Class I viral fusion protein. Responsible for penetration of the virus into the cell cytoplasm by mediating the fusion of the membrane of the endocytosed virus particle with the endosomal membrane. Low pH in endosomes induces an irreversible conformational change in HA2, releasing the fusion hydrophobic peptide. Several trimers are required to form a competent fusion pore. The chain is Hemagglutinin from Influenza A virus (strain A/Beijing/353/1989 H3N2).